Here is a 341-residue protein sequence, read N- to C-terminus: Holliday junction branch migration complex subunit RuvB (341 aa).

A large ATPase domain (RuvB-L) region spans residues 1 to 180 (MAKSHTLNPE…FGIQLRLDYY (180 aa)). Residues Leu-19, Arg-20, Gly-61, Lys-64, Thr-65, Thr-66, Arg-170, Tyr-180, and Arg-217 each coordinate ATP. Thr-65 provides a ligand contact to Mg(2+). The tract at residues 181–251 (NDEEMKEIVL…LCLKAFEKMG (71 aa)) is small ATPAse domain (RuvB-S). The tract at residues 254-341 (DLGLDGMDRQ…ENHGQDPTLF (88 aa)) is head domain (RuvB-H). Positions 309 and 314 each coordinate DNA.

The protein belongs to the RuvB family. Homohexamer. Forms an RuvA(8)-RuvB(12)-Holliday junction (HJ) complex. HJ DNA is sandwiched between 2 RuvA tetramers; dsDNA enters through RuvA and exits via RuvB. An RuvB hexamer assembles on each DNA strand where it exits the tetramer. Each RuvB hexamer is contacted by two RuvA subunits (via domain III) on 2 adjacent RuvB subunits; this complex drives branch migration. In the full resolvosome a probable DNA-RuvA(4)-RuvB(12)-RuvC(2) complex forms which resolves the HJ.

It localises to the cytoplasm. It carries out the reaction ATP + H2O = ADP + phosphate + H(+). Functionally, the RuvA-RuvB-RuvC complex processes Holliday junction (HJ) DNA during genetic recombination and DNA repair, while the RuvA-RuvB complex plays an important role in the rescue of blocked DNA replication forks via replication fork reversal (RFR). RuvA specifically binds to HJ cruciform DNA, conferring on it an open structure. The RuvB hexamer acts as an ATP-dependent pump, pulling dsDNA into and through the RuvAB complex. RuvB forms 2 homohexamers on either side of HJ DNA bound by 1 or 2 RuvA tetramers; 4 subunits per hexamer contact DNA at a time. Coordinated motions by a converter formed by DNA-disengaged RuvB subunits stimulates ATP hydrolysis and nucleotide exchange. Immobilization of the converter enables RuvB to convert the ATP-contained energy into a lever motion, pulling 2 nucleotides of DNA out of the RuvA tetramer per ATP hydrolyzed, thus driving DNA branch migration. The RuvB motors rotate together with the DNA substrate, which together with the progressing nucleotide cycle form the mechanistic basis for DNA recombination by continuous HJ branch migration. Branch migration allows RuvC to scan DNA until it finds its consensus sequence, where it cleaves and resolves cruciform DNA. This chain is Holliday junction branch migration complex subunit RuvB, found in Leptospira borgpetersenii serovar Hardjo-bovis (strain JB197).